The sequence spans 380 residues: Tubulin-like protein CetZ (380 aa).

GTP contacts are provided by residues 10–14 (QCGTK), 103–105 (GTG), glutamate 136, asparagine 163, and asparagine 181. Residues 359 to 380 (PSLEATGSDDPEGFAEYREVSR) are disordered.

The protein belongs to the CetZ family.

It is found in the cytoplasm. Functionally, involved in cell shape control. The protein is Tubulin-like protein CetZ of Thermococcus kodakarensis (strain ATCC BAA-918 / JCM 12380 / KOD1) (Pyrococcus kodakaraensis (strain KOD1)).